The sequence spans 231 residues: Cytidylate kinase (231 aa).

Residue 16-24 (GPAASGKST) coordinates ATP. Positions 176-205 (PDLDSLEQEITKRDRDDAEREHAPLKKHPE) are disordered. Positions 184–205 (EITKRDRDDAEREHAPLKKHPE) are enriched in basic and acidic residues.

It belongs to the cytidylate kinase family. Type 1 subfamily.

Its subcellular location is the cytoplasm. It carries out the reaction CMP + ATP = CDP + ADP. The catalysed reaction is dCMP + ATP = dCDP + ADP. The protein is Cytidylate kinase of Pelodictyon phaeoclathratiforme (strain DSM 5477 / BU-1).